Here is a 361-residue protein sequence, read N- to C-terminus: Innexin inx1 (361 aa).

Residues 1-28 lie on the Cytoplasmic side of the membrane; it reads MYKLLGGLKEYLKWQDIVTDNAIFRLHN. A helical transmembrane segment spans residues 29 to 49; sequence LFTTVLLLTCSLIITATQYVG. Residues 50 to 109 are Extracellular-facing; that stretch reads NPIHCIVNGLPVRPINTYCWITSTFTMPDAFLRQVGSEVAHPGVANDFGDEDAKKYYTYY. A helical transmembrane segment spans residues 110-130; it reads QWVCFVLFFQAMLCYTPKWIW. Over 131-181 the chain is Cytoplasmic; that stretch reads DSIEGGLLRTLIMGLNRGLCQDDEKCMKKKALIEYLLRHIKRHNMYALKYW. A helical membrane pass occupies residues 182 to 202; it reads FCETLCLVNIIGQLYLMNHFF. The Extracellular segment spans residues 203–267; that stretch reads DGEFFSYGLR…LPLNIVNEKT (65 aa). Residues 268-288 traverse the membrane as a helical segment; sequence YIFLWFWYIILAALLSVLVVY. Over 289-361 the chain is Cytoplasmic; sequence RAVILAVPSV…KIETPSSNNP (73 aa).

It belongs to the pannexin family. Expressed in embryonic neural precursors including the dorsal median neuroblast, glial cells, neuropilar glial ring, developing myoblasts cells and in a circumferential band of epithelial cells at the trochanter/coxa boundary stripe in the developing limb.

It localises to the cell membrane. Its subcellular location is the cell junction. The protein resides in the gap junction. Structural components of the gap junctions. The polypeptide is Innexin inx1 (inx1) (Schistocerca americana (American grasshopper)).